A 431-amino-acid chain; its full sequence is Enolase (431 aa).

2 residues coordinate substrate: H157 and E166. Residue E209 is the Proton donor of the active site. D244, E293, and D318 together coordinate Mg(2+). Residues E293 and D318 each contribute to the substrate site. The Proton acceptor role is filled by K343. Residues S370–S373 and K394 contribute to the substrate site.

The protein belongs to the enolase family. In terms of assembly, homodimer. Mg(2+) is required as a cofactor.

It localises to the cytoplasm. It catalyses the reaction (2R)-2-phosphoglycerate = phosphoenolpyruvate + H2O. Its pathway is carbohydrate degradation; glycolysis; pyruvate from D-glyceraldehyde 3-phosphate: step 4/5. The sequence is that of Enolase (ENO) from Fasciola hepatica (Liver fluke).